The primary structure comprises 231 residues: Large ribosomal subunit protein uL1 (231 aa).

Belongs to the universal ribosomal protein uL1 family. In terms of assembly, part of the 50S ribosomal subunit.

In terms of biological role, binds directly to 23S rRNA. The L1 stalk is quite mobile in the ribosome, and is involved in E site tRNA release. Functionally, protein L1 is also a translational repressor protein, it controls the translation of the L11 operon by binding to its mRNA. The polypeptide is Large ribosomal subunit protein uL1 (Caldanaerobacter subterraneus subsp. tengcongensis (strain DSM 15242 / JCM 11007 / NBRC 100824 / MB4) (Thermoanaerobacter tengcongensis)).